Reading from the N-terminus, the 584-residue chain is Pescadillo homolog (584 aa).

The required for 28S ribosomal RNA processing stretch occupies residues 1–54 (MGGLEKKKYERGSATNYITRNKARKKLQLSLPDFRRLCILKGIYPHEPKHKKKV). Positions 1-257 (MGGLEKKKYE…PKLEGQAQAE (257 aa)) are sufficient for nucleolar localization. Lys98 carries the post-translational modification N6-acetyllysine. The interval 312 to 414 (RKKELEAQEK…LLLPVAEYFP (103 aa)) is sufficient for interaction with MAP1B. A BRCT domain is found at 321–414 (KHKKLFEGLK…LLLPVAEYFP (94 aa)). Positions 449-510 (DPGHLEEEEE…EEKKPQVMAG (62 aa)) are disordered. The segment covering 454-489 (EEEEEEDEDDDNEGDVAAENEEEDVEVESEEEEEEE) has biased composition (acidic residues). A compositionally biased stretch (basic and acidic residues) spans 496–505 (EQHRLEEKKP). A Glycyl lysine isopeptide (Lys-Gly) (interchain with G-Cter in SUMO1); alternate cross-link involves residue Lys513. Lys513 participates in a covalent cross-link: Glycyl lysine isopeptide (Lys-Gly) (interchain with G-Cter in SUMO2); alternate. The required for 28S ribosomal RNA processing stretch occupies residues 535–584 (MMKKREKYLYQKIMFGKRRKIREANKLAEKRKAHDDAVRSEKKAKRTRPV). Over residues 560–575 (KLAEKRKAHDDAVRSE) the composition is skewed to basic and acidic residues. Residues 560–584 (KLAEKRKAHDDAVRSEKKAKRTRPV) form a disordered region.

The protein belongs to the pescadillo family. As to quaternary structure, component of the PeBoW complex, composed of BOP1, PES1 and WDR12. The complex is held together by BOP1, which interacts with PES1 via its N-terminal domain and with WDR12 via a high-affinity interaction between the seven-bladed beta-propeller domains of the 2 proteins. The PeBoW complex associates with the 66S pre-ribosome. The PeBoW complex also associates with DDX27, PES1 interacts directly with DDX27. Interacts with IRS1 and UBTF. May interact with MAP1B. In terms of processing, sumoylated. In terms of tissue distribution, ubiquitous. Highest levels appear to be found in tissues that contain a population of proliferating cells, such as ovary and testis. Also appears to be highly expressed in kidney and liver. In the brain expression is restricted to neural progenitor cells and postmitotic neurons. Highly expressed in malignant astrocytes.

Its subcellular location is the nucleus. The protein resides in the nucleolus. The protein localises to the nucleoplasm. It localises to the chromosome. Component of the PeBoW complex, which is required for maturation of 28S and 5.8S ribosomal RNAs and formation of the 60S ribosome. This Mus musculus (Mouse) protein is Pescadillo homolog (Pes1).